We begin with the raw amino-acid sequence, 297 residues long: tRNA dimethylallyltransferase (297 aa).

Position 15-22 (15-22) interacts with ATP; the sequence is GPTASGKS. 17 to 22 lines the substrate pocket; it reads TASGKS. Interaction with substrate tRNA stretches follow at residues 40–43 and 164–168; these read DSMQ and QRIVR.

It belongs to the IPP transferase family. In terms of assembly, monomer. Requires Mg(2+) as cofactor.

It catalyses the reaction adenosine(37) in tRNA + dimethylallyl diphosphate = N(6)-dimethylallyladenosine(37) in tRNA + diphosphate. In terms of biological role, catalyzes the transfer of a dimethylallyl group onto the adenine at position 37 in tRNAs that read codons beginning with uridine, leading to the formation of N6-(dimethylallyl)adenosine (i(6)A). This Rhizobium etli (strain ATCC 51251 / DSM 11541 / JCM 21823 / NBRC 15573 / CFN 42) protein is tRNA dimethylallyltransferase.